The following is a 415-amino-acid chain: Glucose-1-phosphate adenylyltransferase (415 aa).

Alpha-D-glucose 1-phosphate contacts are provided by residues Tyr-98, Gly-163, 178-179, and Ser-189; that span reads EK.

This sequence belongs to the bacterial/plant glucose-1-phosphate adenylyltransferase family. In terms of assembly, homotetramer.

It catalyses the reaction alpha-D-glucose 1-phosphate + ATP + H(+) = ADP-alpha-D-glucose + diphosphate. Its pathway is glycan biosynthesis; glycogen biosynthesis. Functionally, involved in the biosynthesis of ADP-glucose, a building block required for the elongation reactions to produce glycogen. Catalyzes the reaction between ATP and alpha-D-glucose 1-phosphate (G1P) to produce pyrophosphate and ADP-Glc. The sequence is that of Glucose-1-phosphate adenylyltransferase from Fervidobacterium nodosum (strain ATCC 35602 / DSM 5306 / Rt17-B1).